The chain runs to 190 residues: Syndecan-2-B (190 aa).

Positions 1–22 (MRNVWLIVPFALLAAFSGETWA) are cleaved as a signal peptide. Topologically, residues 23–136 (QADRDLYIDS…NLFHRTEVLA (114 aa)) are extracellular. Residues 34-60 (ESSGNYPVDDDDYSSGSGSGIPAHDDD) are disordered. Residues serine 36, serine 48, serine 50, and serine 52 are each glycosylated (O-linked (Xyl...) (glycosaminoglycan) serine). Residues 137-157 (AVIAGGGIGFLFAVFLILLLV) form a helical membrane-spanning segment. Residues 158–190 (YRMRKKDEGSYDLGERKPSSAVYQKAPTKEFYA) lie on the Cytoplasmic side of the membrane. Residues 167 to 190 (SYDLGERKPSSAVYQKAPTKEFYA) form a disordered region.

The protein belongs to the syndecan proteoglycan family. O-glycosylated; contains both heparan sulfate and chondroitin sulfate.

The protein resides in the membrane. In terms of biological role, cell surface proteoglycan. This Xenopus laevis (African clawed frog) protein is Syndecan-2-B (sdc2-b).